Reading from the N-terminus, the 545-residue chain is Hydroxylamine reductase (545 aa).

Cys3, Cys6, Cys15, and Cys21 together coordinate [4Fe-4S] cluster. 8 residues coordinate hybrid [4Fe-2O-2S] cluster: His241, Glu265, Cys309, Cys396, Cys424, Cys449, Glu483, and Lys485. Cys396 carries the cysteine persulfide modification.

This sequence belongs to the HCP family. Requires [4Fe-4S] cluster as cofactor. Hybrid [4Fe-2O-2S] cluster serves as cofactor.

The protein resides in the cytoplasm. The catalysed reaction is A + NH4(+) + H2O = hydroxylamine + AH2 + H(+). Functionally, catalyzes the reduction of hydroxylamine to form NH(3) and H(2)O. This is Hydroxylamine reductase from Zymomonas mobilis subsp. mobilis (strain ATCC 31821 / ZM4 / CP4).